The chain runs to 206 residues: dITP/XTP pyrophosphatase (206 aa).

7–12 lines the substrate pocket; the sequence is SNNAKK. The active-site Proton acceptor is D72. D72 contacts Mg(2+). Substrate contacts are provided by residues S73, 155-158, K182, and 187-188; these read FGYD and HR.

It belongs to the HAM1 NTPase family. In terms of assembly, homodimer. Requires Mg(2+) as cofactor.

The enzyme catalyses XTP + H2O = XMP + diphosphate + H(+). It carries out the reaction dITP + H2O = dIMP + diphosphate + H(+). It catalyses the reaction ITP + H2O = IMP + diphosphate + H(+). Its function is as follows. Pyrophosphatase that catalyzes the hydrolysis of nucleoside triphosphates to their monophosphate derivatives, with a high preference for the non-canonical purine nucleotides XTP (xanthosine triphosphate), dITP (deoxyinosine triphosphate) and ITP. Seems to function as a house-cleaning enzyme that removes non-canonical purine nucleotides from the nucleotide pool, thus preventing their incorporation into DNA/RNA and avoiding chromosomal lesions. The sequence is that of dITP/XTP pyrophosphatase from Corynebacterium glutamicum (strain ATCC 13032 / DSM 20300 / JCM 1318 / BCRC 11384 / CCUG 27702 / LMG 3730 / NBRC 12168 / NCIMB 10025 / NRRL B-2784 / 534).